The sequence spans 106 residues: Large ribosomal subunit protein uL24 (106 aa).

Belongs to the universal ribosomal protein uL24 family. As to quaternary structure, part of the 50S ribosomal subunit.

Its function is as follows. One of two assembly initiator proteins, it binds directly to the 5'-end of the 23S rRNA, where it nucleates assembly of the 50S subunit. One of the proteins that surrounds the polypeptide exit tunnel on the outside of the subunit. The sequence is that of Large ribosomal subunit protein uL24 from Alkalilimnicola ehrlichii (strain ATCC BAA-1101 / DSM 17681 / MLHE-1).